Reading from the N-terminus, the 328-residue chain is Sphingolipid delta(4)-desaturase DES1-like (328 aa).

3 helical membrane-spanning segments follow: residues 50–70 (PLAF…ATLL), 78–98 (ILTV…LAIH), and 114–134 (WLGI…FQKY). Residues 98-102 (HELSH) carry the Histidine box-1 motif. The short motif at 135-139 (HLEHH) is the Histidine box-2 element. 3 consecutive transmembrane segments (helical) span residues 164–184 (LSKS…PLFL), 192–212 (WEFT…YFFG), and 217–237 (AYLI…GHFI). A Histidine box-3 motif is present at residues 266-270 (HNEHH).

Belongs to the fatty acid desaturase type 1 family. DEGS subfamily.

Its subcellular location is the endoplasmic reticulum membrane. The enzyme catalyses an N-acylsphinganine + 2 Fe(II)-[cytochrome b5] + O2 + 2 H(+) = an N-acylsphing-4-enine + 2 Fe(III)-[cytochrome b5] + 2 H2O. Its function is as follows. Sphingolipid-delta-4-desaturase required for the biosynthesis of delta-4-unsaturated sphingolipids and derivatives. The protein is Sphingolipid delta(4)-desaturase DES1-like of Oryza sativa subsp. japonica (Rice).